A 320-amino-acid chain; its full sequence is Small ribosomal subunit protein uS2 (320 aa).

Residues 254–320 (GDAAKAALPV…APATTGPVSE (67 aa)) are disordered. Over residues 272–282 (VSAKNEAKSDD) the composition is skewed to basic and acidic residues. Over residues 308-320 (AEAAPATTGPVSE) the composition is skewed to low complexity.

The protein belongs to the universal ribosomal protein uS2 family.

This is Small ribosomal subunit protein uS2 from Clavibacter sepedonicus (Clavibacter michiganensis subsp. sepedonicus).